A 123-amino-acid chain; its full sequence is Dihydroneopterin triphosphate 2'-epimerase (123 aa).

The protein belongs to the DHNA family. As to quaternary structure, homooctamer. Dimer of tetramers.

It catalyses the reaction 7,8-dihydroneopterin 3'-triphosphate = 7,8-dihydromonapterin 3'-triphosphate. In terms of biological role, catalyzes the epimerization of carbon 2' of the side chain of 7,8-dihydroneopterin triphosphate (H2NTP) to form 7,8-dihydromonapterin triphosphate (H2MTP). Is required for tetrahydromonapterin biosynthesis. This chain is Dihydroneopterin triphosphate 2'-epimerase, found in Pseudomonas aeruginosa (strain ATCC 15692 / DSM 22644 / CIP 104116 / JCM 14847 / LMG 12228 / 1C / PRS 101 / PAO1).